The chain runs to 328 residues: 4-hydroxythreonine-4-phosphate dehydrogenase (328 aa).

Positions 130 and 131 each coordinate substrate. A divalent metal cation-binding residues include H163, H208, and H263. Positions 271, 280, and 289 each coordinate substrate.

The protein belongs to the PdxA family. In terms of assembly, homodimer. It depends on Zn(2+) as a cofactor. Mg(2+) serves as cofactor. The cofactor is Co(2+).

The protein resides in the cytoplasm. The catalysed reaction is 4-(phosphooxy)-L-threonine + NAD(+) = 3-amino-2-oxopropyl phosphate + CO2 + NADH. It functions in the pathway cofactor biosynthesis; pyridoxine 5'-phosphate biosynthesis; pyridoxine 5'-phosphate from D-erythrose 4-phosphate: step 4/5. In terms of biological role, catalyzes the NAD(P)-dependent oxidation of 4-(phosphooxy)-L-threonine (HTP) into 2-amino-3-oxo-4-(phosphooxy)butyric acid which spontaneously decarboxylates to form 3-amino-2-oxopropyl phosphate (AHAP). The polypeptide is 4-hydroxythreonine-4-phosphate dehydrogenase (Burkholderia vietnamiensis (strain G4 / LMG 22486) (Burkholderia cepacia (strain R1808))).